We begin with the raw amino-acid sequence, 285 residues long: uncharacterized protein (285 aa).

Residues His184–Arg282 form the HTH araC/xylS-type domain. 2 consecutive DNA-binding regions (H-T-H motif) follow at residues Glu201–Gly222 and Ile249–Phe272.

This is an uncharacterized protein from Escherichia coli (strain K12).